The chain runs to 144 residues: Large ribosomal subunit protein uL15 (144 aa).

Positions 1 to 53 (MRLNTLSPAVGAKSAPKRVGRGIGSGLGKTAGRGHKGQKSRSGGGVRPGFEGG) are disordered. Gly residues-rich tracts occupy residues 21–31 (RGIGSGLGKTA) and 42–52 (SGGGVRPGFEG).

Belongs to the universal ribosomal protein uL15 family. As to quaternary structure, part of the 50S ribosomal subunit.

In terms of biological role, binds to the 23S rRNA. This is Large ribosomal subunit protein uL15 from Shewanella amazonensis (strain ATCC BAA-1098 / SB2B).